A 456-amino-acid polypeptide reads, in one-letter code: Nuclear prelamin A recognition factor (456 aa).

The segment at 12–36 (SKKSKTDDQENVSVDVPSPAQENEE) is disordered. The residue at position 29 (serine 29) is a Phosphoserine.

This sequence belongs to the NARF family. As to quaternary structure, interacts with LMNA and binds to the farnesylated C-terminal domain.

It is found in the nucleus. This is Nuclear prelamin A recognition factor (Narf) from Rattus norvegicus (Rat).